The primary structure comprises 161 residues: ERDLLVAVTMDHELGHNLGIRHDTGSCSCGGYSCVMSPVISHDISKYFSDCSYIQCWDFIMKENPQCILNKHLRTDTVSTPVSGNELLEAGEECDCGTPGNPCCDAATCKLRPGAQCAEGLCCDQCRFKGAGKICRRARGDNPDDRCTGQSADCPRNRFHA.

A Peptidase M12B domain is found at 1-72; the sequence is ERDLLVAVTM…ENPQCILNKH (72 aa). His-12 is a Zn(2+) binding site. Residue Glu-13 is part of the active site. Zn(2+)-binding residues include His-16 and His-22. 2 cysteine pairs are disulfide-bonded: Cys-27–Cys-51 and Cys-29–Cys-34. A propeptide spanning residues 73-88 is cleaved from the precursor; the sequence is LRTDTVSTPVSGNELL. Positions 89 to 161 constitute a Disintegrin domain; sequence EAGEECDCGT…ADCPRNRFHA (73 aa). 6 disulfides stabilise this stretch: Cys-94–Cys-109, Cys-96–Cys-104, Cys-103–Cys-126, Cys-117–Cys-123, Cys-122–Cys-147, and Cys-135–Cys-154. The Cell attachment site motif lies at 139–141; sequence RGD.

This sequence belongs to the venom metalloproteinase (M12B) family. P-II subfamily. P-IIa sub-subfamily. In terms of assembly, monomer. As to expression, expressed by the venom gland.

It is found in the secreted. Functionally, impairs hemostasis in the envenomed animal. Its function is as follows. Disintegrin: inhibit platelet aggregation induced by ADP, thrombin, platelet-activating factor and collagen. Acts by inhibiting fibrinogen interaction with platelet receptors GPIIb/GPIIIa (ITGA2B/ITGB3). This Bothrops jararaca (Jararaca) protein is Zinc metalloproteinase/disintegrin.